The sequence spans 125 residues: Temptin (125 aa).

Positions 1 to 22 are cleaved as a signal peptide; the sequence is MEQKRTLRVFLAVSLLCALANA. 2 disulfides stabilise this stretch: C40–C125 and C79–C99. The interval 78 to 125 is disordered; sequence LCDMDSDGDGRSNGVELGDPECVWSQGETPARTTDLSHPGFDEATVSC. Residues 103-113 are compositionally biased toward polar residues; it reads QGETPARTTDL.

Binds to attractin and enticin. As to expression, produced by the albumen gland of the egg cordons.

The protein localises to the secreted. In terms of biological role, a component of the complex of water-borne protein pheromones that stimulates attraction and mating behavior. Modulates pheromone signaling by direct binding to attractin. This is Temptin from Aplysia californica (California sea hare).